The chain runs to 84 residues: uncharacterized protein (84 aa).

This is an uncharacterized protein from Escherichia coli O6:H1 (strain CFT073 / ATCC 700928 / UPEC).